Consider the following 354-residue polypeptide: Protein-glutamate methylesterase/protein-glutamine glutaminase of group 3 operon (354 aa).

Residues 3 to 121 (RILLATSTVE…MQLEQPAIEK (119 aa)) enclose the Response regulatory domain. The region spanning 158-340 (PIGIVGIAAS…LESIAENITA (183 aa)) is the CheB-type methylesterase domain. Residues Ser-167, His-194, and Asp-287 contribute to the active site.

It belongs to the CheB family.

Its subcellular location is the cytoplasm. It carries out the reaction [protein]-L-glutamate 5-O-methyl ester + H2O = L-glutamyl-[protein] + methanol + H(+). It catalyses the reaction L-glutaminyl-[protein] + H2O = L-glutamyl-[protein] + NH4(+). Functionally, involved in chemotaxis. Part of a chemotaxis signal transduction system that modulates chemotaxis in response to various stimuli. Catalyzes the demethylation of specific methylglutamate residues introduced into the chemoreceptors (methyl-accepting chemotaxis proteins or MCP) by CheR. Also mediates the irreversible deamidation of specific glutamine residues to glutamic acid. The polypeptide is Protein-glutamate methylesterase/protein-glutamine glutaminase of group 3 operon (Rhizobium meliloti (strain 1021) (Ensifer meliloti)).